A 251-amino-acid chain; its full sequence is Triosephosphate isomerase (251 aa).

Positions 10 and 12 each coordinate substrate. H95 acts as the Electrophile in catalysis. E167 acts as the Proton acceptor in catalysis.

The protein belongs to the triosephosphate isomerase family. Homodimer.

The enzyme catalyses D-glyceraldehyde 3-phosphate = dihydroxyacetone phosphate. Its pathway is carbohydrate biosynthesis; gluconeogenesis. It participates in carbohydrate degradation; glycolysis; D-glyceraldehyde 3-phosphate from glycerone phosphate: step 1/1. This Coprinopsis cinerea (strain Okayama-7 / 130 / ATCC MYA-4618 / FGSC 9003) (Inky cap fungus) protein is Triosephosphate isomerase (TPI).